The following is a 296-amino-acid chain: Large ribosomal subunit protein uL15m (296 aa).

A mitochondrion-targeting transit peptide spans 1 to 20 (MAASGGSGGKATELLRCLPR). The tract at residues 25 to 66 (NLRPNPGARHREKRRGRGIHGGRKSGRGHKGETQRGNQPRLG) is disordered. Positions 32–52 (ARHREKRRGRGIHGGRKSGRG) are enriched in basic residues.

Belongs to the universal ribosomal protein uL15 family. In terms of assembly, component of the mitochondrial ribosome large subunit (39S) which comprises a 16S rRNA and about 50 distinct proteins.

The protein localises to the mitochondrion. In Xenopus laevis (African clawed frog), this protein is Large ribosomal subunit protein uL15m (mrpl15).